We begin with the raw amino-acid sequence, 350 residues long: tRNA uridine(34) hydroxylase (350 aa).

Positions 146 to 240 (DDPDAVFIDM…YARRARAQGL (95 aa)) constitute a Rhodanese domain. The active-site Cysteine persulfide intermediate is the C200. Residues 319-328 (RRRRAGRENG) are compositionally biased toward basic and acidic residues. A disordered region spans residues 319–350 (RRRRAGRENGNKIFNKSRGRLNSKLSIPDPAE).

Belongs to the TrhO family.

It catalyses the reaction uridine(34) in tRNA + AH2 + O2 = 5-hydroxyuridine(34) in tRNA + A + H2O. Catalyzes oxygen-dependent 5-hydroxyuridine (ho5U) modification at position 34 in tRNAs. This Salmonella paratyphi B (strain ATCC BAA-1250 / SPB7) protein is tRNA uridine(34) hydroxylase.